The following is a 358-amino-acid chain: Phenylalanine--tRNA ligase alpha subunit (358 aa).

Glu-258 is a Mg(2+) binding site.

It belongs to the class-II aminoacyl-tRNA synthetase family. Phe-tRNA synthetase alpha subunit type 1 subfamily. In terms of assembly, tetramer of two alpha and two beta subunits. Requires Mg(2+) as cofactor.

The protein resides in the cytoplasm. It catalyses the reaction tRNA(Phe) + L-phenylalanine + ATP = L-phenylalanyl-tRNA(Phe) + AMP + diphosphate + H(+). The polypeptide is Phenylalanine--tRNA ligase alpha subunit (Rhodospirillum centenum (strain ATCC 51521 / SW)).